We begin with the raw amino-acid sequence, 530 residues long: Pyridoxine/pyridoxamine 5'-phosphate oxidase 1, chloroplastic (530 aa).

The N-terminal 64 residues, 1-64 (MRNVIRRVTT…TLCTKVIIPN (64 aa)), are a transit peptide targeting the chloroplast. Met-65 bears the N-acetylmethionine mark. A YjeF N-terminal domain is found at 81–297 (AAEIDETLMG…SVAEKYKLEL (217 aa)). 131–135 (NNGGD) serves as a coordination point for (6S)-NADPHX. K(+) is bound by residues Asn-132 and Asp-196. (6S)-NADPHX contacts are provided by residues 200 to 206 (GFSFHGA) and Asp-238. Residue Ser-241 coordinates K(+). Pyridoxal 5'-phosphate is bound at residue 247–250 (EGDH). Residue 321 to 324 (RVNY) participates in substrate binding. Residue 325–327 (VSP) participates in pyridoxal 5'-phosphate binding. 374–377 (RMVL) provides a ligand contact to FMN. A pyridoxal 5'-phosphate-binding site is contributed by Lys-379. FMN is bound by residues 389-390 (FT), 395-396 (KK), and Gln-418. Pyridoxal 5'-phosphate contacts are provided by Tyr-436, Arg-440, and Ser-444. Residues 453 to 454 (QS) and Trp-499 contribute to the FMN site. A pyridoxal 5'-phosphate-binding site is contributed by 505-507 (RLH). Residue Arg-509 participates in FMN binding.

The protein in the N-terminal section; belongs to the NnrE/AIBP family. In the C-terminal section; belongs to the pyridoxamine 5'-phosphate oxidase family. In terms of assembly, homodimer. It depends on FMN as a cofactor. K(+) serves as cofactor. As to expression, expressed in leaves, stems, flowers and roots.

The protein localises to the plastid. It is found in the chloroplast. It catalyses the reaction pyridoxamine 5'-phosphate + O2 + H2O = pyridoxal 5'-phosphate + H2O2 + NH4(+). The catalysed reaction is pyridoxine 5'-phosphate + O2 = pyridoxal 5'-phosphate + H2O2. It carries out the reaction (6R)-NADHX = (6S)-NADHX. The enzyme catalyses (6R)-NADPHX = (6S)-NADPHX. It functions in the pathway cofactor metabolism; pyridoxal 5'-phosphate salvage; pyridoxal 5'-phosphate from pyridoxamine 5'-phosphate: step 1/1. The protein operates within cofactor metabolism; pyridoxal 5'-phosphate salvage; pyridoxal 5'-phosphate from pyridoxine 5'-phosphate: step 1/1. Functionally, catalyzes the oxidation of either pyridoxine 5'-phosphate (PNP) or pyridoxamine 5'-phosphate (PMP) into pyridoxal 5'-phosphate (PLP). Involved in the PLP salvage pathway. Has a higher preference for PNP over PMP. May also catalyze the epimerization of the S- and R-forms of NAD(P)HX, a damaged form of NAD(P)H that is a result of enzymatic or heat-dependent hydration. This is a prerequisite for the S-specific NAD(P)H-hydrate dehydratase to allow the repair of both epimers of NAD(P)HX. The protein is Pyridoxine/pyridoxamine 5'-phosphate oxidase 1, chloroplastic (PPOX1) of Arabidopsis thaliana (Mouse-ear cress).